We begin with the raw amino-acid sequence, 282 residues long: Glucuronoxylan 4-O-methyltransferase 1 (282 aa).

Residues 13–33 (VLLVFLLATLILIFIVRSTLT) traverse the membrane as a helical segment.

Belongs to the methyltransferase superfamily. In terms of tissue distribution, expressed in rosette leaves, stems, flowers and siliques.

Its subcellular location is the golgi apparatus membrane. It catalyses the reaction glucuronoxylan D-glucuronate + n S-adenosyl-L-methionine = glucuronoxylan 4-O-methyl-D-glucuronate + n S-adenosyl-L-homocysteine + n H(+). Its function is as follows. Methyltransferase catalyzing 4-O-methylation of glucuronic acid side chains on xylan. In Arabidopsis thaliana (Mouse-ear cress), this protein is Glucuronoxylan 4-O-methyltransferase 1 (GXM1).